A 626-amino-acid chain; its full sequence is Phosphomethylpyrimidine synthase (626 aa).

Residues 1 to 22 are disordered; the sequence is MTKQEKAINLSESAQVDQQSVQ. Residues 10–22 are compositionally biased toward polar residues; sequence LSESAQVDQQSVQ. Residues asparagine 232, methionine 261, tyrosine 290, histidine 326, 346–348, 387–390, and glutamate 426 each bind substrate; these read SRG and DGLR. Histidine 430 provides a ligand contact to Zn(2+). Residue tyrosine 453 coordinates substrate. Histidine 494 provides a ligand contact to Zn(2+). Residues cysteine 574, cysteine 577, and cysteine 582 each contribute to the [4Fe-4S] cluster site.

Belongs to the ThiC family. Homodimer. [4Fe-4S] cluster is required as a cofactor.

The enzyme catalyses 5-amino-1-(5-phospho-beta-D-ribosyl)imidazole + S-adenosyl-L-methionine = 4-amino-2-methyl-5-(phosphooxymethyl)pyrimidine + CO + 5'-deoxyadenosine + formate + L-methionine + 3 H(+). The protein operates within cofactor biosynthesis; thiamine diphosphate biosynthesis. Its function is as follows. Catalyzes the synthesis of the hydroxymethylpyrimidine phosphate (HMP-P) moiety of thiamine from aminoimidazole ribotide (AIR) in a radical S-adenosyl-L-methionine (SAM)-dependent reaction. The polypeptide is Phosphomethylpyrimidine synthase (Pseudomonas putida (strain ATCC 700007 / DSM 6899 / JCM 31910 / BCRC 17059 / LMG 24140 / F1)).